Here is a 398-residue protein sequence, read N- to C-terminus: Isochorismate synthase DhbC (398 aa).

Residue S271 is modified to Phosphoserine.

Belongs to the isochorismate synthase family.

It catalyses the reaction chorismate = isochorismate. The protein operates within siderophore biosynthesis; bacillibactin biosynthesis. This is Isochorismate synthase DhbC (dhbC) from Bacillus subtilis (strain 168).